A 295-amino-acid chain; its full sequence is G1/S-specific cyclin-D1 (295 aa).

Positions 28–152 (LRAMLKAEET…VLVNKLKWNL (125 aa)) constitute a Cyclin N-terminal domain. Positions 264-295 (QQNLDPKAAEEEEEEEEVDLACTPTDVRDVNI) are disordered. Lys-270 is covalently cross-linked (Glycyl lysine isopeptide (Lys-Gly) (interchain with G-Cter in ubiquitin)). Residues 273–282 (EEEEEEEEVD) show a composition bias toward acidic residues. Residue Thr-286 is modified to Phosphothreonine.

The protein belongs to the cyclin family. Cyclin D subfamily. Interacts with either CDK4 or CDK6 protein kinase to form a serine/threonine kinase holoenzyme complex. The cyclin subunit imparts substrate specificity to the complex. Component of the ternary complex CCND1/CDK4/CDKN1B required for nuclear translocation and modulation of CDK4-mediated kinase activity. Interacts directly with CDKN1B. Can form similar complexes with either CDKN1A or CDKN2A. Interacts with UHRF2; the interaction ubiquitinates CCND1 and appears to occur independently of phosphorylation. Interacts with USP2. Interacts (via cyclin N-terminal domain) with INSM1 (via N-terminal region); the interaction competes with the binding of CCND1 to CDK4 during cell cycle progression and inhibits CDK4 activity. Interacts with CDK4; the interaction is prevented with the binding of CCND1 to INSM1 during cell cycle progression. Phosphorylation at Thr-286 by MAP kinases is required for ubiquitination and degradation by the DCX(AMBRA1) complex. It also plays an essential role for recognition by the FBXO31 component of SCF (SKP1-cullin-F-box) protein ligase complex following DNA damage. Post-translationally, ubiquitinated at Lys-270 by the DCX(AMBRA1) complex during the transition from G1 to S cell phase, leading to its degradation: ubiquitination is dependent on Thr-286 phosphorylation. The DCX(AMBRA1) complex represents the major regulator of CCND1 stability during the G1/S transition. Also ubiquitinated by the SCF(FBXO4) and Cul7-RING(FBXW8) ubiquitin-protein ligase complexes. Following DNA damage it is ubiquitinated by the SCF(FBXO31) protein ligase complex. SCF(FBXO31) ubiquitination is dependent on Thr-286 phosphorylation. Ubiquitinated also by UHRF2 apparently in a phosphorylation-independent manner. Ubiquitination leads to its degradation and G1 arrest. Deubiquitinated by USP2; leading to its stabilization.

Its subcellular location is the nucleus. The protein resides in the cytoplasm. It is found in the nucleus membrane. Its function is as follows. Regulatory component of the cyclin D1-CDK4 (DC) complex that phosphorylates and inhibits members of the retinoblastoma (RB) protein family including RB1 and regulates the cell-cycle during G(1)/S transition. Phosphorylation of RB1 allows dissociation of the transcription factor E2F from the RB/E2F complex and the subsequent transcription of E2F target genes which are responsible for the progression through the G(1) phase. Hypophosphorylates RB1 in early G(1) phase. Cyclin D-CDK4 complexes are major integrators of various mitogenenic and antimitogenic signals. Also a substrate for SMAD3, phosphorylating SMAD3 in a cell-cycle-dependent manner and repressing its transcriptional activity. Component of the ternary complex, cyclin D1/CDK4/CDKN1B, required for nuclear translocation and activity of the cyclin D-CDK4 complex. Exhibits transcriptional corepressor activity with INSM1 on the NEUROD1 and INS promoters in a cell cycle-independent manner. This Bos taurus (Bovine) protein is G1/S-specific cyclin-D1 (CCND1).